The sequence spans 210 residues: ATP phosphoribosyltransferase (210 aa).

The protein belongs to the ATP phosphoribosyltransferase family. Short subfamily. As to quaternary structure, heteromultimer composed of HisG and HisZ subunits.

It localises to the cytoplasm. It catalyses the reaction 1-(5-phospho-beta-D-ribosyl)-ATP + diphosphate = 5-phospho-alpha-D-ribose 1-diphosphate + ATP. It functions in the pathway amino-acid biosynthesis; L-histidine biosynthesis; L-histidine from 5-phospho-alpha-D-ribose 1-diphosphate: step 1/9. In terms of biological role, catalyzes the condensation of ATP and 5-phosphoribose 1-diphosphate to form N'-(5'-phosphoribosyl)-ATP (PR-ATP). Has a crucial role in the pathway because the rate of histidine biosynthesis seems to be controlled primarily by regulation of HisG enzymatic activity. The sequence is that of ATP phosphoribosyltransferase from Bacillus cytotoxicus (strain DSM 22905 / CIP 110041 / 391-98 / NVH 391-98).